Here is a 93-residue protein sequence, read N- to C-terminus: Pyrimidine/purine nucleoside phosphorylase (93 aa).

Belongs to the nucleoside phosphorylase PpnP family.

The catalysed reaction is a purine D-ribonucleoside + phosphate = a purine nucleobase + alpha-D-ribose 1-phosphate. It carries out the reaction adenosine + phosphate = alpha-D-ribose 1-phosphate + adenine. The enzyme catalyses cytidine + phosphate = cytosine + alpha-D-ribose 1-phosphate. It catalyses the reaction guanosine + phosphate = alpha-D-ribose 1-phosphate + guanine. The catalysed reaction is inosine + phosphate = alpha-D-ribose 1-phosphate + hypoxanthine. It carries out the reaction thymidine + phosphate = 2-deoxy-alpha-D-ribose 1-phosphate + thymine. The enzyme catalyses uridine + phosphate = alpha-D-ribose 1-phosphate + uracil. It catalyses the reaction xanthosine + phosphate = alpha-D-ribose 1-phosphate + xanthine. Functionally, catalyzes the phosphorolysis of diverse nucleosides, yielding D-ribose 1-phosphate and the respective free bases. Can use uridine, adenosine, guanosine, cytidine, thymidine, inosine and xanthosine as substrates. Also catalyzes the reverse reactions. The protein is Pyrimidine/purine nucleoside phosphorylase of Pseudoalteromonas atlantica (strain T6c / ATCC BAA-1087).